We begin with the raw amino-acid sequence, 129 residues long: Glycine cleavage system H protein (129 aa).

A Lipoyl-binding domain is found at 23–104 (SVTVGITHHA…AYTAWLFKIK (82 aa)). Lys-64 bears the N6-lipoyllysine mark.

Belongs to the GcvH family. The glycine cleavage system is composed of four proteins: P, T, L and H. It depends on (R)-lipoate as a cofactor.

Its function is as follows. The glycine cleavage system catalyzes the degradation of glycine. The H protein shuttles the methylamine group of glycine from the P protein to the T protein. In Thiobacillus denitrificans (strain ATCC 25259 / T1), this protein is Glycine cleavage system H protein.